The following is a 353-amino-acid chain: MAQADRPARGGLAARPMRGASFALAGLVACAACAAVVLWLRPAAPSPAPAGAVAGGPAAGVPAAASGAAEAAMPLPAALPGALAGSHAPRLPLAAGGRLARTRAVREFFDYCLTAQGELTPAALDALVRREIAAQLDGSPAQAEALGVWRRYRAYFDALAQLPGDGAVLGDKLDPAAMQLALDQRAALADRTLGEWAEPFFGDEQRRQRHDLERIRIANDTTLSPEQKAARLAALDAQLTPDERAQQAALHAQQDAVTKIADLQKAGATPDQMRAQIAQTLGPEAAARAAQMQQDDEAWQTRYQAYAAERDRIAAQGLAPQDRDARIAQLRQQTFTAPGEAIRAASLDRGAGG.

The Cytoplasmic portion of the chain corresponds to 1-19 (MAQADRPARGGLAARPMRG). The helical transmembrane segment at 20 to 40 (ASFALAGLVACAACAAVVLWL) threads the bilayer. Residues 41–353 (RPAAPSPAPA…AASLDRGAGG (313 aa)) lie on the Periplasmic side of the membrane.

The protein belongs to the lipase chaperone family. As to quaternary structure, monomer. Interacts with lipase (lip).

It is found in the cell inner membrane. Functionally, involved in the folding of the extracellular lipase (lip) during its passage through the periplasm. This is Lipase-specific foldase from Burkholderia plantarii.